The following is a 499-amino-acid chain: 3-beta-hydroxylase (499 aa).

Residues 2–22 (FSSFETLILSFVSLFFMMIFI) form a helical; Signal-anchor for type II membrane protein membrane-spanning segment. Residue Cys-441 coordinates heme.

This sequence belongs to the cytochrome P450 family. It depends on heme as a cofactor.

The protein resides in the membrane. It carries out the reaction (+)-costunolide + reduced [NADPH--hemoprotein reductase] + O2 = 3beta-hydroxycostunolide + oxidized [NADPH--hemoprotein reductase] + H2O + H(+). It catalyses the reaction parthenolide + reduced [NADPH--hemoprotein reductase] + O2 = 3beta-hydroxyparthenolide + oxidized [NADPH--hemoprotein reductase] + H2O + H(+). It functions in the pathway secondary metabolite biosynthesis; terpenoid biosynthesis. In terms of biological role, involved in the biosynthesis of germacrene-derived sesquiterpene lactones. Component of the parthenolide biosynthetic pathway; parthenolide and conjugates are promising anti-cancer drugs highly active against colon cancer cells. Catalyzes the conversion of costunolide and parthenolide to 3-beta-hydroxycostunolide and 3-beta-hydroxyparthenolide, respectively. This Tanacetum parthenium (Feverfew) protein is 3-beta-hydroxylase.